The following is an 824-amino-acid chain: 4-methylaminobutanoate oxidase (formaldehyde-forming) (824 aa).

The residue at position 67 (H67) is a Pros-8alpha-FAD histidine.

It belongs to the GcvT family. Requires FAD as cofactor.

The catalysed reaction is 4-(methylamino)butanoate + O2 + H2O = 4-aminobutanoate + formaldehyde + H2O2. Its pathway is alkaloid degradation; nicotine degradation. Functionally, catalyzes the oxidative demethylation of 4-methylaminobutanoate produced from the pyrrolidine ring of nicotine. To a much lesser extent, can also use sarcosine as substrate, but is not active against dimethylglycine, methylaminopropionitrile, methylaminopropylamine, and alpha-methylaminobutanoate. This chain is 4-methylaminobutanoate oxidase (formaldehyde-forming) (abo), found in Paenarthrobacter nicotinovorans (Arthrobacter nicotinovorans).